We begin with the raw amino-acid sequence, 103 residues long: Large ribosomal subunit protein uL24 (103 aa).

Belongs to the universal ribosomal protein uL24 family. Part of the 50S ribosomal subunit.

In terms of biological role, one of two assembly initiator proteins, it binds directly to the 5'-end of the 23S rRNA, where it nucleates assembly of the 50S subunit. Functionally, one of the proteins that surrounds the polypeptide exit tunnel on the outside of the subunit. The polypeptide is Large ribosomal subunit protein uL24 (Pediococcus pentosaceus (strain ATCC 25745 / CCUG 21536 / LMG 10740 / 183-1w)).